Consider the following 708-residue polypeptide: MTKDLNTLVSELPEIYQTIFGHPEWDGDAARDCNQRLDLITEQYDNLSRALGRPLNVLDLGCAQGFFSLSLASKGATIVGIDFQQENINVCRALAEENPDFAAEFRVGRIEEVIAALEEGEFDLAIGLSVFHHIVHLHGIDEVKRLLSRLADVTQAVILELAVKEEPLYWGVSQPDDPRELIEQCAFYRLIGEFDTHLSPVPRPMYLVSNHRVLINDFNQPFQHWQNQPYAGAGLAHKRSRRYFFGEDYVCKFFYYDMPHGILTAEESQRNKHELHNEIKFLTQPPAGFDAPAVLAHGENAQSGWLVMEKLPGRLLSDMLAAGEEIDREKILGSLLRSLAALEKQGFWHDDVRPWNVMVDARQHARLIDFGSIVTTPQDCSWPTNLVQSFFVFVNELFAENKSWNGFWRSAPVHPFNLPQPWSNWLYAVWQEPVERWNFALLLALFEKKAKLPSAEQQRGATEQWIIAQETVLLELQSRGRNESAGSEALRGQIHTLEQQMAQLQSAQDAFVEKAQQPVEVSHELTWLGENMEQLAALLQTAQAHAQADVQPELPPETAELLQRLEAANREIHHLSNENQQLRQEIEKIHRSRSWRMTKGYRYLGLQIHLLRQYGFVQRCKHFIKRVLRFVFSFMRKHPQVKHTAVNGLHKLGLYQPAYRLYRRMNPLPHSQYQADAQILSQTELQVMHPELLPPEVYEIYLKLTKNK.

Residues 1-210 (MTKDLNTLVS…VPRPMYLVSN (210 aa)) are methyltransferase. Residues 16 to 17 (YQ), arginine 36, glycine 61, 82 to 87 (DFQQEN), 108 to 111 (GRIE), and leucine 128 contribute to the S-adenosyl-L-methionine site. The kinase stretch occupies residues 211-459 (HRVLINDFNQ…AKLPSAEQQR (249 aa)). ATP contacts are provided by residues proline 229, histidine 237, 241–243 (RRY), lysine 252, glutamate 274, 309–311 (EKL), methionine 358, and aspartate 369. Positions 485 to 594 (AGSEALRGQI…EIEKIHRSRS (110 aa)) form a coiled coil. The tract at residues 601–669 (YRYLGLQIHL…RLYRRMNPLP (69 aa)) is required for membrane-binding. The tract at residues 687–708 (VMHPELLPPEVYEIYLKLTKNK) is required for localizing WbdA to the membrane.

Belongs to the WbdD family. Interacts with WbdA.

Its subcellular location is the cell inner membrane. It catalyses the reaction 3-O-phospho-alpha-D-Man-(1-&gt;2)-alpha-D-Man-(1-&gt;2)-[alpha-D-Man-(1-&gt;3)-alpha-D-Man-(1-&gt;3)-alpha-D-Man-(1-&gt;2)-alpha-D-Man-(1-&gt;2)](n)-alpha-D-Man-(1-&gt;3)-alpha-D-Man-(1-&gt;3)-alpha-D-Man-(1-&gt;3)-alpha-D-GlcNAc-di-trans,octa-cis-undecaprenyl diphosphate + S-adenosyl-L-methionine = 3-O-methylphospho-alpha-D-Man-(1-&gt;2)-alpha-D-Man-(1-&gt;2)-[alpha-D-Man-(1-&gt;3)-alpha-D-Man-(1-&gt;3)-alpha-D-Man-(1-&gt;2)-alpha-D-Man-(1-&gt;2)](n)-alpha-D-Man-(1-&gt;3)-alpha-D-Man-(1-&gt;3)-alpha-D-Man-(1-&gt;3)-alpha-D-GlcNAc-di-trans,octa-cis-undecaprenyl diphosphate + S-adenosyl-L-homocysteine. The enzyme catalyses alpha-D-Man-(1-&gt;2)-alpha-D-Man-(1-&gt;2)-[alpha-D-Man-(1-&gt;3)-alpha-D-Man-(1-&gt;3)-alpha-D-Man-(1-&gt;2)-alpha-D-Man-(1-&gt;2)](n)-alpha-D-Man-(1-&gt;3)-alpha-D-Man-(1-&gt;3)-alpha-D-Man-(1-&gt;3)-alpha-D-GlcNAc-di-trans,octa-cis-undecaprenyl diphosphate + ATP = 3-O-phospho-alpha-D-Man-(1-&gt;2)-alpha-D-Man-(1-&gt;2)-[alpha-D-Man-(1-&gt;3)-alpha-D-Man-(1-&gt;3)-alpha-D-Man-(1-&gt;2)-alpha-D-Man-(1-&gt;2)](n)-alpha-D-Man-(1-&gt;3)-alpha-D-Man-(1-&gt;3)-alpha-D-Man-(1-&gt;3)-alpha-D-GlcNAc-di-trans,octa-cis-undecaprenyl diphosphate + ADP + H(+). Its pathway is bacterial outer membrane biogenesis; LPS O-antigen biosynthesis. In terms of biological role, regulates the length of the LPS O-antigen polysaccharide chain. Stops the polymerization of the chain by phosphorylating and then methylating the phosphate on the terminal sugar. This terminal modification is essential for export of the O-antigen across the inner membrane. WbdD is also required for correct localization of the WbdA mannosyltransferase. This chain is O-antigen chain terminator bifunctional methyltransferase/kinase WbdD, found in Escherichia coli.